The sequence spans 207 residues: Uridine kinase (207 aa).

An ATP-binding site is contributed by 14-21 (GGSGSGKT).

The protein belongs to the uridine kinase family.

It is found in the cytoplasm. The enzyme catalyses uridine + ATP = UMP + ADP + H(+). The catalysed reaction is cytidine + ATP = CMP + ADP + H(+). It functions in the pathway pyrimidine metabolism; CTP biosynthesis via salvage pathway; CTP from cytidine: step 1/3. Its pathway is pyrimidine metabolism; UMP biosynthesis via salvage pathway; UMP from uridine: step 1/1. The protein is Uridine kinase of Deinococcus deserti (strain DSM 17065 / CIP 109153 / LMG 22923 / VCD115).